We begin with the raw amino-acid sequence, 134 residues long: Fluoride-specific ion channel FluC (134 aa).

The next 4 helical transmembrane spans lie at 7–27 (LAVAIGGSLGAMSRYLVTIMA), 38–58 (GTLLVNTLGSFLAGFFLIVLV), 69–89 (LFLFTGFLGAFTTFSSFAAES), and 110–130 (VGSLSMVFIGTLVAKYVLLGH). The Na(+) site is built by glycine 77 and threonine 80.

The protein belongs to the fluoride channel Fluc/FEX (TC 1.A.43) family.

The protein resides in the cell inner membrane. It carries out the reaction fluoride(in) = fluoride(out). With respect to regulation, na(+) is not transported, but it plays an essential structural role and its presence is essential for fluoride channel function. In terms of biological role, fluoride-specific ion channel. Important for reducing fluoride concentration in the cell, thus reducing its toxicity. This Legionella pneumophila subsp. pneumophila (strain Philadelphia 1 / ATCC 33152 / DSM 7513) protein is Fluoride-specific ion channel FluC.